The primary structure comprises 347 residues: Large ribosomal subunit protein uL3 (347 aa).

This sequence belongs to the universal ribosomal protein uL3 family. Part of the 50S ribosomal subunit. Forms a cluster with proteins L14 and L24e.

In terms of biological role, one of the primary rRNA binding proteins, it binds directly near the 3'-end of the 23S rRNA, where it nucleates assembly of the 50S subunit. The sequence is that of Large ribosomal subunit protein uL3 from Caldivirga maquilingensis (strain ATCC 700844 / DSM 13496 / JCM 10307 / IC-167).